The following is a 215-amino-acid chain: 3-isopropylmalate dehydratase small subunit (215 aa).

This sequence belongs to the LeuD family. LeuD type 1 subfamily. In terms of assembly, heterodimer of LeuC and LeuD.

The enzyme catalyses (2R,3S)-3-isopropylmalate = (2S)-2-isopropylmalate. Its pathway is amino-acid biosynthesis; L-leucine biosynthesis; L-leucine from 3-methyl-2-oxobutanoate: step 2/4. Functionally, catalyzes the isomerization between 2-isopropylmalate and 3-isopropylmalate, via the formation of 2-isopropylmaleate. In Xanthomonas euvesicatoria pv. vesicatoria (strain 85-10) (Xanthomonas campestris pv. vesicatoria), this protein is 3-isopropylmalate dehydratase small subunit.